Reading from the N-terminus, the 611-residue chain is DNA mismatch repair protein MutL (611 aa).

Belongs to the DNA mismatch repair MutL/HexB family.

This protein is involved in the repair of mismatches in DNA. It is required for dam-dependent methyl-directed DNA mismatch repair. May act as a 'molecular matchmaker', a protein that promotes the formation of a stable complex between two or more DNA-binding proteins in an ATP-dependent manner without itself being part of a final effector complex. This chain is DNA mismatch repair protein MutL, found in Borreliella afzelii (strain PKo) (Borrelia afzelii).